Reading from the N-terminus, the 194-residue chain is Large ribosomal subunit protein bL25 (194 aa).

The protein belongs to the bacterial ribosomal protein bL25 family. CTC subfamily. As to quaternary structure, part of the 50S ribosomal subunit; part of the 5S rRNA/L5/L18/L25 subcomplex. Contacts the 5S rRNA. Binds to the 5S rRNA independently of L5 and L18.

In terms of biological role, this is one of the proteins that binds to the 5S RNA in the ribosome where it forms part of the central protuberance. The sequence is that of Large ribosomal subunit protein bL25 from Geotalea uraniireducens (strain Rf4) (Geobacter uraniireducens).